The primary structure comprises 320 residues: Cytochrome f (320 aa).

Positions 1 to 35 (MQTRNTFSWIKEEITRSISVSLMIYIITGASISNA) are cleaved as a signal peptide. Residues Tyr36, Cys56, Cys59, and His60 each coordinate heme. The chain crosses the membrane as a helical span at residues 286–306 (VQGLLFFLASIVFAQIFLVLK).

The protein belongs to the cytochrome f family. In terms of assembly, the 4 large subunits of the cytochrome b6-f complex are cytochrome b6, subunit IV (17 kDa polypeptide, petD), cytochrome f and the Rieske protein, while the 4 small subunits are PetG, PetL, PetM and PetN. The complex functions as a dimer. Heme is required as a cofactor.

The protein localises to the plastid. It localises to the chloroplast thylakoid membrane. In terms of biological role, component of the cytochrome b6-f complex, which mediates electron transfer between photosystem II (PSII) and photosystem I (PSI), cyclic electron flow around PSI, and state transitions. In Gossypium hirsutum (Upland cotton), this protein is Cytochrome f.